We begin with the raw amino-acid sequence, 257 residues long: Diphthine synthase (257 aa).

Residues leucine 9, aspartate 83, methionine 86, 111 to 112 (SI), and isoleucine 163 contribute to the S-adenosyl-L-methionine site.

The protein belongs to the diphthine synthase family. Homodimer.

The catalysed reaction is 2-[(3S)-amino-3-carboxypropyl]-L-histidyl-[translation elongation factor 2] + 3 S-adenosyl-L-methionine = diphthine-[translation elongation factor 2] + 3 S-adenosyl-L-homocysteine + 3 H(+). It functions in the pathway protein modification; peptidyl-diphthamide biosynthesis. Its function is as follows. S-adenosyl-L-methionine-dependent methyltransferase that catalyzes the trimethylation of the amino group of the modified target histidine residue in translation elongation factor 2 (EF-2), to form an intermediate called diphthine. The three successive methylation reactions represent the second step of diphthamide biosynthesis. In Thermoplasma acidophilum (strain ATCC 25905 / DSM 1728 / JCM 9062 / NBRC 15155 / AMRC-C165), this protein is Diphthine synthase.